We begin with the raw amino-acid sequence, 288 residues long: 2-hydroxy-6-oxononadienedioate/2-hydroxy-6-oxononatrienedioate hydrolase (288 aa).

One can recognise an AB hydrolase-1 domain in the interval A38–H274. H268 acts as the Proton acceptor in catalysis.

This sequence belongs to the AB hydrolase superfamily. MhpC family. As to quaternary structure, homodimer.

It catalyses the reaction (2Z,4E)-2-hydroxy-6-oxonona-2,4-dienedioate + H2O = (2Z)-2-hydroxypenta-2,4-dienoate + succinate + H(+). It carries out the reaction (2Z,4E,7E)-2-hydroxy-6-oxonona-2,4,7-trienedioate + H2O = (2Z)-2-hydroxypenta-2,4-dienoate + fumarate + H(+). The protein operates within aromatic compound metabolism; 3-phenylpropanoate degradation. Functionally, catalyzes the cleavage of the C5-C6 bond of 2-hydroxy-6-oxononadienedioate and 2-hydroxy-6-oxononatrienedioate, a dienol ring fission product of the bacterial meta-cleavage pathway for degradation of phenylpropionic acid. The polypeptide is 2-hydroxy-6-oxononadienedioate/2-hydroxy-6-oxononatrienedioate hydrolase (Burkholderia vietnamiensis (strain G4 / LMG 22486) (Burkholderia cepacia (strain R1808))).